Here is a 619-residue protein sequence, read N- to C-terminus: Mitogen-activated protein kinase kinase kinase 2 (619 aa).

4 disordered regions span residues 25–44 (LSLQ…QNDV), 126–168 (QATN…PPPG), 201–245 (LDPL…DNHQ), and 289–355 (RTQG…APTN). The residue at position 26 (S26) is a Phosphoserine. Positions 43–122 (DVRVKFEHRG…KSLKILLVVN (80 aa)) constitute a PB1 domain. Residues 126 to 143 (QATNLEPSPSPEDLNNTP) are compositionally biased toward polar residues. Phosphoserine is present on residues S153 and S164. Over residues 203–219 (PLSLSSPENSGSGSCPS) the composition is skewed to low complexity. 6 positions are modified to phosphoserine: S239, S297, S311, S331, S344, and S349. The segment covering 290–299 (TQGTSFRSPV) has biased composition (polar residues). The span at 300–315 (SFSPTDHSLSTSSGSS) shows a compositional bias: low complexity. Over residues 322 to 332 (DDSRIRRRGSD) the composition is skewed to basic and acidic residues. A compositionally biased stretch (polar residues) spans 336–346 (PTLTVTDISPP). The 261-residue stretch at 356–616 (WRLGKLLGQG…AEELLRHMFV (261 aa)) folds into the Protein kinase domain. ATP contacts are provided by residues 362–370 (LGQGAFGRV) and K385. D483 serves as the catalytic Proton acceptor.

It belongs to the protein kinase superfamily. STE Ser/Thr protein kinase family. MAP kinase kinase kinase subfamily. Self-associates. Binds both upstream activators and downstream substrates in multimolecular complexes. Interacts (via the kinase catalytic domain) with STK38. Interacts with XIAP/BIRC4. Requires Mg(2+) as cofactor. In terms of processing, ubiquitination by XIAP/BIRC4 does not lead to proteasomal degradation. Autophosphorylated.

It localises to the cytoplasm. The protein localises to the nucleus. The catalysed reaction is L-seryl-[protein] + ATP = O-phospho-L-seryl-[protein] + ADP + H(+). The enzyme catalyses L-threonyl-[protein] + ATP = O-phospho-L-threonyl-[protein] + ADP + H(+). Activated by phosphorylation on Thr-524. Interacts with PKN2; the interaction activates PKN2 kinase activity in a MAP3K2-independent kinase activity. In terms of biological role, component of a protein kinase signal transduction cascade. Regulates the JNK and ERK5 pathways by phosphorylating and activating MAP2K5 and MAP2K7. Plays a role in caveolae kiss-and-run dynamics. The sequence is that of Mitogen-activated protein kinase kinase kinase 2 (Map3k2) from Mus musculus (Mouse).